The chain runs to 538 residues: Atos homolog protein B (538 aa).

A compositionally biased stretch (low complexity) spans 1–18 (MRHVQAEPSPSSEPEAGP). Disordered stretches follow at residues 1 to 114 (MRHV…LGVA) and 133 to 300 (TSSW…VLDP). Residues 227–238 (HTPPGPGPPGPC) are compositionally biased toward pro residues. Phosphoserine is present on residues Ser-254 and Ser-255. The tract at residues 348-430 (LLGNFEESLL…VPKVGTVQVT (83 aa)) is required for macropage invasion. The tract at residues 436–444 (QTVVKMFLV) is transactivation domain 1 (TAD1).

Belongs to the ATOS family.

It localises to the nucleus. Transcription regulator that may syncronize transcriptional and translational programs. This chain is Atos homolog protein B, found in Homo sapiens (Human).